Consider the following 368-residue polypeptide: Isopentenyl-diphosphate delta-isomerase (368 aa).

Arg-7–Lys-8 serves as a coordination point for substrate. FMN-binding positions include Thr-65, Gly-66–Thr-68, Ser-96, and Asn-125. Residue Ser-96–Arg-98 participates in substrate binding. Gln-160 contributes to the substrate binding site. Glu-161 contacts Mg(2+). Residues Lys-193, Ser-218, Thr-223, Gly-275–Arg-277, and Ala-296–Leu-297 each bind FMN.

It belongs to the IPP isomerase type 2 family. Homooctamer. Dimer of tetramers. FMN is required as a cofactor. It depends on NADPH as a cofactor. Mg(2+) serves as cofactor.

It localises to the cytoplasm. The catalysed reaction is isopentenyl diphosphate = dimethylallyl diphosphate. Involved in the biosynthesis of isoprenoids. Catalyzes the 1,3-allylic rearrangement of the homoallylic substrate isopentenyl (IPP) to its allylic isomer, dimethylallyl diphosphate (DMAPP). This is Isopentenyl-diphosphate delta-isomerase from Saccharolobus islandicus (strain L.S.2.15 / Lassen #1) (Sulfolobus islandicus).